We begin with the raw amino-acid sequence, 238 residues long: Epoxyqueuosine reductase QueH (238 aa).

[4Fe-4S] cluster contacts are provided by Cys43, Cys44, Cys129, and Cys132. Cys211 and Cys213 are joined by a disulfide.

Belongs to the QueH family.

The catalysed reaction is epoxyqueuosine(34) in tRNA + AH2 = queuosine(34) in tRNA + A + H2O. The protein operates within tRNA modification; tRNA-queuosine biosynthesis. In terms of biological role, catalyzes the conversion of epoxyqueuosine (oQ) to queuosine (Q), which is a hypermodified base found in the wobble positions of tRNA(Asp), tRNA(Asn), tRNA(His) and tRNA(Tyr). The sequence is that of Epoxyqueuosine reductase QueH from Staphylococcus epidermidis (strain ATCC 12228 / FDA PCI 1200).